The following is a 464-amino-acid chain: L-cystine uptake protein TcyP (464 aa).

A run of 10 helical transmembrane segments spans residues 3-23 (TLLV…LYYM), 34-54 (VFTA…IYEP), 73-93 (YVKL…ISAF), 107-127 (GLII…GIAA), 184-204 (PTST…FIGV), 225-245 (IVMR…LALM), 263-283 (FVLA…LLIA), 347-367 (AGIY…IDPL), 371-391 (FILT…GVGG), and 395-415 (FAAL…ALVI).

Belongs to the dicarboxylate/amino acid:cation symporter (DAACS) (TC 2.A.23) family.

It localises to the membrane. Its function is as follows. Mediates uptake of L-cystine, the oxidized form of L-cysteine. This Bacillus thuringiensis (strain Al Hakam) protein is L-cystine uptake protein TcyP.